The primary structure comprises 145 residues: Small ribosomal subunit protein uS12A (145 aa).

Residue Pro-64 is modified to Hydroxyproline.

It belongs to the universal ribosomal protein uS12 family.

The sequence is that of Small ribosomal subunit protein uS12A (RPS23A) from Naumovozyma castellii (Yeast).